A 354-amino-acid polypeptide reads, in one-letter code: Guanine nucleotide-binding protein G(i) subunit alpha-1 (354 aa).

The N-myristoyl glycine moiety is linked to residue Gly2. Cys3 carries S-palmitoyl cysteine lipidation. Positions 32–354 (REVKLLLLGA…KNNLKDCGLF (323 aa)) constitute a G-alpha domain. Residues 35 to 48 (KLLLLGAGESGKST) form a G1 motif region. Residues 43 to 48 (ESGKST), 150 to 151 (DS), and 175 to 178 (LRTR) each bind GTP. A Mg(2+)-binding site is contributed by Ser47. The segment at 173–181 (DVLRTRVKT) is G2 motif. Residue Thr181 participates in Mg(2+) binding. A G3 motif region spans residues 196 to 205 (FKMFDVGGQR). GTP is bound by residues 200–204 (DVGGQ), 269–272 (NKKD), and Ala326. The segment at 265–272 (ILFLNKKD) is G4 motif. Residues 324–329 (TCATDT) form a G5 motif region.

Belongs to the G-alpha family. G(i/o/t/z) subfamily. Heterotrimeric G proteins are composed of 3 units; alpha, beta and gamma. The alpha chain contains the guanine nucleotide binding site. Part of a spindle orientation complex at least composed of GNAI1, GPSM2 and NUMA1. Identified in complex with the beta subunit GNB1 and the gamma subunit GNG1. Identified in complex with the beta subunit GNB1 and the gamma subunit GNG2. Component of the TAS2R14-GNAI1 complex, consisting of TAS2R14, GNAI1, GNB1 and GNG2; within the complex interacts with TAS2R14; this complex plays a role in the perception of bitterness. GTP binding causes dissociation of the heterotrimer, liberating the individual subunits so that they can interact with downstream effector proteins. Interacts (GDP-bound form) with GPSM1; this inhibits guanine nucleotide exchange and GTP binding. Interacts (GDP-bound form) with GPSM2 (via GoLoco domains); this inhibits guanine nucleotide exchange. Interacts with RGS10; this strongly enhances GTP hydrolysis. Interacts with RGS1 and RGS16. Interacts with RGS4. Interacts with RGS12. Interacts (via active GTP- or inactive GDP-bound forms) with RGS14 (via RGS and GoLoco domains). Interacts with RGS3, RGS6, RGS7, RGS8, RGS17, RGS18 and RGS20 (in vitro). Interacts (GDP-bound form) with RIC8A (via C-terminus); promoting GNAI1 folding and association with the plasma membrane. Interacts (inactive GDP-bound form) with NUCB1 (via GBA motif); the interaction leads to activation of GNAI1. Interacts (inactive GDP-bound form) with CCDC88C/DAPLE (via GBA motif); the interaction leads to activation of GNAI1. Interacts (inactive GDP-bound form) with CCDC8A/GIV (via GBA motif). Interacts with GPR15. In terms of processing, myristoylation at Gly-2 is required for membrane anchoring before palmitoylation. Palmitoylation at Cys-3 varies with membrane lipid composition.

It localises to the nucleus. The protein localises to the cytoplasm. It is found in the cell membrane. The protein resides in the cytoskeleton. Its subcellular location is the microtubule organizing center. It localises to the centrosome. The protein localises to the cell cortex. It is found in the membrane. It catalyses the reaction GTP + H2O = GDP + phosphate + H(+). Its function is as follows. Guanine nucleotide-binding proteins (G proteins) function as transducers downstream of G protein-coupled receptors (GPCRs) in numerous signaling cascades. The alpha chain contains the guanine nucleotide binding site and alternates between an active, GTP-bound state and an inactive, GDP-bound state. Signaling by an activated GPCR promotes GDP release and GTP binding. The alpha subunit has a low GTPase activity that converts bound GTP to GDP, thereby terminating the signal. Both GDP release and GTP hydrolysis are modulated by numerous regulatory proteins. Signaling is mediated via effector proteins, such as adenylate cyclase. Inhibits adenylate cyclase activity of ADCY1, ADCY5 and ADCY6, leading to decreased intracellular cAMP levels. The inactive GDP-bound form prevents the association of RGS14 with centrosomes and is required for the translocation of RGS14 from the cytoplasm to the plasma membrane. Required for normal cytokinesis during mitosis. Required for cortical dynein-dynactin complex recruitment during metaphase. The polypeptide is Guanine nucleotide-binding protein G(i) subunit alpha-1 (Gnai1) (Rattus norvegicus (Rat)).